The chain runs to 61 residues: Bactridin-1 (61 aa).

An LCN-type CS-alpha/beta domain is found at 1–61; the sequence is KDGYIIEHRG…KIFDSNNLKC (61 aa). 4 cysteine pairs are disulfide-bonded: Cys-11/Cys-61, Cys-15/Cys-37, Cys-23/Cys-42, and Cys-27/Cys-44.

This sequence belongs to the long (4 C-C) scorpion toxin superfamily. Sodium channel inhibitor family. Beta subfamily. Expressed by the venom gland.

The protein resides in the secreted. Functionally, shows antibacterial activity against both Gram-positive bacteria (B.subtilis, M.luteus, E.faecalis) and Gram-negative bacteria (P.aeruginosa, Y.enterocolitica, A.calcoaceticus). Modifies membrane sodium permeability on Y.enterocolitica. Is toxic to cockroaches and crabs, but is not toxic to mice. Does not induce haemolysis in human erythrocytes. Acts by inhibiting the sodium (Nav) currents. In Tityus discrepans (Venezuelan scorpion), this protein is Bactridin-1.